A 379-amino-acid polypeptide reads, in one-letter code: Structure-specific endonuclease subunit EME2 (379 aa).

The tract at residues 1–55 is disordered; it reads MARVGPGRAGVSCQGRGRGRGGSGQRRPPTWEISDSDAEDSAGSEAAARARDPAG. Residues 50–266 form a nuclease-like domain; forms the post-nick DNA binding interface and is involved in DNA recognition and bending region; it reads ARDPAGERRA…YPLKQYRESQ (217 aa). Residues 288 to 379 are helix-hairpin-helix (2HhH); forms the pre-nick DNA binding interface and is involved in DNA recognition and bending; the sequence is GLQAAWRRQI…NPDLLLDLGS (92 aa).

It belongs to the EME1/MMS4 family. Part of the heterodimeric MUS81-EME2 complex; the complex forms specifically during the DNA replication phase of the cell cycle.

The protein resides in the nucleus. Non-catalytic subunit of the structure-specific, heterodimeric DNA endonuclease MUS81-EME2 which is involved in the maintenance of genome stability. In the complex, EME2 is required for DNA cleavage, participating in DNA recognition and bending. MUS81-EME2 cleaves 3'-flaps and nicked Holliday junctions, and exhibit limited endonuclease activity with 5' flaps and nicked double-stranded DNAs. MUS81-EME2 which is active during the replication of DNA is more specifically involved in replication fork processing. Replication forks frequently encounter obstacles to their passage, including DNA base lesions, DNA interstrand cross-links, difficult-to-replicate sequences, transcription bubbles, or tightly bound proteins. One mechanism for the restart of a stalled replication fork involves nucleolytic cleavage mediated by the MUS81-EME2 endonuclease. By acting upon the stalled fork, MUS81-EME2 generates a DNA double-strand break (DSB) that can be repaired by homologous recombination, leading to the restoration of an active fork. MUS81-EME2 could also function in telomere maintenance. The chain is Structure-specific endonuclease subunit EME2 from Homo sapiens (Human).